The sequence spans 293 residues: 4-diphosphocytidyl-2-C-methyl-D-erythritol kinase (293 aa).

The active site involves Lys-16. Pro-99–Ser-109 is a binding site for ATP. The active site involves Asp-141.

The protein belongs to the GHMP kinase family. IspE subfamily.

The catalysed reaction is 4-CDP-2-C-methyl-D-erythritol + ATP = 4-CDP-2-C-methyl-D-erythritol 2-phosphate + ADP + H(+). It participates in isoprenoid biosynthesis; isopentenyl diphosphate biosynthesis via DXP pathway; isopentenyl diphosphate from 1-deoxy-D-xylulose 5-phosphate: step 3/6. Catalyzes the phosphorylation of the position 2 hydroxy group of 4-diphosphocytidyl-2C-methyl-D-erythritol. The chain is 4-diphosphocytidyl-2-C-methyl-D-erythritol kinase from Burkholderia multivorans (strain ATCC 17616 / 249).